A 477-amino-acid polypeptide reads, in one-letter code: Aspartyl/glutamyl-tRNA(Asn/Gln) amidotransferase subunit B (477 aa).

Belongs to the GatB/GatE family. GatB subfamily. As to quaternary structure, heterotrimer of A, B and C subunits.

It catalyses the reaction L-glutamyl-tRNA(Gln) + L-glutamine + ATP + H2O = L-glutaminyl-tRNA(Gln) + L-glutamate + ADP + phosphate + H(+). It carries out the reaction L-aspartyl-tRNA(Asn) + L-glutamine + ATP + H2O = L-asparaginyl-tRNA(Asn) + L-glutamate + ADP + phosphate + 2 H(+). Its function is as follows. Allows the formation of correctly charged Asn-tRNA(Asn) or Gln-tRNA(Gln) through the transamidation of misacylated Asp-tRNA(Asn) or Glu-tRNA(Gln) in organisms which lack either or both of asparaginyl-tRNA or glutaminyl-tRNA synthetases. The reaction takes place in the presence of glutamine and ATP through an activated phospho-Asp-tRNA(Asn) or phospho-Glu-tRNA(Gln). In Clostridium tetani (strain Massachusetts / E88), this protein is Aspartyl/glutamyl-tRNA(Asn/Gln) amidotransferase subunit B.